The sequence spans 356 residues: Decorin (356 aa).

Residues 1-15 (MRLVLFILLLPVCLA) form the signal peptide. A propeptide spanning residues 16–29 (TPFHQKGLFDFMLE) is cleaved from the precursor. Residue S45 is glycosylated (O-linked (Xyl...) (glycosaminoglycan) serine). Cystine bridges form between C51-C57 and C55-C64. LRR repeat units follow at residues 70 to 90 (ERVP…NNKI), 91 to 114 (TEIR…NNKI), 115 to 138 (SKIS…KNNL), 139 to 159 (KELP…ENEI), 160 to 183 (SKLR…TNPL), 184 to 209 (KSSG…DTNI), 210 to 230 (TSIP…GNKI), 231 to 254 (SKID…FNSI), 255 to 278 (SSVE…NNEL), 279 to 301 (VRVP…NNKI), 302 to 331 (ASIG…SNPV), and 332 to 356 (QYWE…GNYK). N-linked (GlcNAc...) asparagine glycosylation occurs at N208. N259 is a glycosylation site (N-linked (GlcNAc...) asparagine). A disulfide bridge connects residues C310 and C343.

Belongs to the small leucine-rich proteoglycan (SLRP) family. SLRP class I subfamily. As to quaternary structure, binds to type I and type II collagen, to fibronectin and TGF-beta. Forms a ternary complex with MFAP2 and ELN. Post-translationally, the attached glycosaminoglycan chain can be either chondroitin sulfate or dermatan sulfate depending upon the tissue of origin.

Its subcellular location is the secreted. It is found in the extracellular space. The protein resides in the extracellular matrix. In terms of biological role, may affect the rate of fibrils formation. This Coturnix japonica (Japanese quail) protein is Decorin (DCN).